We begin with the raw amino-acid sequence, 340 residues long: Protein RecA (340 aa).

An ATP-binding site is contributed by 66–73 (GPESSGKT).

Belongs to the RecA family.

It localises to the cytoplasm. Its function is as follows. Can catalyze the hydrolysis of ATP in the presence of single-stranded DNA, the ATP-dependent uptake of single-stranded DNA by duplex DNA, and the ATP-dependent hybridization of homologous single-stranded DNAs. It interacts with LexA causing its activation and leading to its autocatalytic cleavage. This is Protein RecA from Rickettsia prowazekii (strain Madrid E).